We begin with the raw amino-acid sequence, 639 residues long: UvrABC system protein C (639 aa).

Positions 20 to 97 (ERSGVYRMFD…IKKFQPKFNI (78 aa)) constitute a GIY-YIG domain. The region spanning 207–242 (KELQENLSRKMEELSSQMRFEEAAEIRDRIKALSYV) is the UVR domain.

It belongs to the UvrC family. As to quaternary structure, interacts with UvrB in an incision complex.

It localises to the cytoplasm. In terms of biological role, the UvrABC repair system catalyzes the recognition and processing of DNA lesions. UvrC both incises the 5' and 3' sides of the lesion. The N-terminal half is responsible for the 3' incision and the C-terminal half is responsible for the 5' incision. This Rickettsia africae (strain ESF-5) protein is UvrABC system protein C.